Consider the following 65-residue polypeptide: uncharacterized protein (65 aa).

This sequence to E.coli YjiX.

This is an uncharacterized protein from Escherichia coli O6:H1 (strain CFT073 / ATCC 700928 / UPEC).